The following is a 157-amino-acid chain: uncharacterized protein (157 aa).

Residues 9–154 (LLINYKTLDE…ETNLNAVTNE (146 aa)) enclose the N-acetyltransferase domain.

This is an uncharacterized protein from Bacillus cereus (strain ATCC 14579 / DSM 31 / CCUG 7414 / JCM 2152 / NBRC 15305 / NCIMB 9373 / NCTC 2599 / NRRL B-3711).